Consider the following 351-residue polypeptide: UDP-N-acetylenolpyruvoylglucosamine reductase (351 aa).

Residues 11–213 (GVGGSIACFI…KQVRDQVLRI (203 aa)) enclose the FAD-binding PCMH-type domain. Residue arginine 158 is part of the active site. The active-site Proton donor is the serine 239. Residue glutamate 343 is part of the active site.

The protein belongs to the MurB family. The cofactor is FAD.

It is found in the cytoplasm. The catalysed reaction is UDP-N-acetyl-alpha-D-muramate + NADP(+) = UDP-N-acetyl-3-O-(1-carboxyvinyl)-alpha-D-glucosamine + NADPH + H(+). It functions in the pathway cell wall biogenesis; peptidoglycan biosynthesis. Cell wall formation. The polypeptide is UDP-N-acetylenolpyruvoylglucosamine reductase (Tropheryma whipplei (strain Twist) (Whipple's bacillus)).